We begin with the raw amino-acid sequence, 312 residues long: Olfactory receptor 4F3/4F16/4F29 (312 aa).

Residues 1–25 (MDGENHSVVSEFLFLGLTHSWEIQL) lie on the Extracellular side of the membrane. An N-linked (GlcNAc...) asparagine glycan is attached at Asn-5. Residues 26–49 (LLLVFSSVLYVASITGNILIVFSV) traverse the membrane as a helical segment. Residues 50–57 (TTDPHLHS) lie on the Cytoplasmic side of the membrane. A helical transmembrane segment spans residues 58-79 (PMYFLLASLSFIDLGACSVTSP). Topologically, residues 80 to 100 (KMIYDLFRKRKVISFGGCIAQ) are extracellular. An intrachain disulfide couples Cys-97 to Cys-189. A helical membrane pass occupies residues 101 to 120 (IFFIHVVGGVEMVLLIAMAF). Residues 121–139 (DRYVALCKPLHYLTIMSPR) are Cytoplasmic-facing. A helical transmembrane segment spans residues 140 to 158 (MCLSFLAVAWTLGVSHSLF). Topologically, residues 159–195 (QLAFLVNLAFCGPNVLDSFYCDLPRLLRLACTDTYRL) are extracellular. A helical membrane pass occupies residues 196-219 (QFMVTVNSGFICVGTFFILLISYV). The Cytoplasmic segment spans residues 220 to 235 (FILFTVWKHSSGGSSK). A helical transmembrane segment spans residues 236–258 (ALSTLSAHSTVVLLFFGPPMFVY). Residues 259-269 (TRPHPNSQMDK) lie on the Extracellular side of the membrane. A helical transmembrane segment spans residues 270–289 (FLAIFDAVLTPFLNPVVYTF). The Cytoplasmic portion of the chain corresponds to 290–312 (RNKEMKAAIKRVCKQLVIYKRIS).

Belongs to the G-protein coupled receptor 1 family.

Its subcellular location is the cell membrane. Functionally, odorant receptor. This is Olfactory receptor 4F3/4F16/4F29 (OR4F3) from Homo sapiens (Human).